The sequence spans 464 residues: tRNA modification GTPase MnmE (464 aa).

The (6S)-5-formyl-5,6,7,8-tetrahydrofolate site is built by Arg-27, Glu-90, and Lys-129. One can recognise a TrmE-type G domain in the interval 222 to 384 (GVTLVLAGSV…LYDRIRSFIA (163 aa)). GTP is bound by residues 232–237 (NVGKSS), 251–257 (SSYAGTT), and 276–279 (DTAG). Residue Ser-236 participates in Mg(2+) binding. Ser-251 is a K(+) binding site. Thr-257 provides a ligand contact to Mg(2+). Lys-464 lines the (6S)-5-formyl-5,6,7,8-tetrahydrofolate pocket.

It belongs to the TRAFAC class TrmE-Era-EngA-EngB-Septin-like GTPase superfamily. TrmE GTPase family. As to quaternary structure, homodimer. Heterotetramer of two MnmE and two MnmG subunits. K(+) is required as a cofactor.

It localises to the cytoplasm. Functionally, exhibits a very high intrinsic GTPase hydrolysis rate. Involved in the addition of a carboxymethylaminomethyl (cmnm) group at the wobble position (U34) of certain tRNAs, forming tRNA-cmnm(5)s(2)U34. This is tRNA modification GTPase MnmE from Borrelia recurrentis (strain A1).